A 207-amino-acid chain; its full sequence is LexA repressor (207 aa).

A DNA-binding region (H-T-H motif) is located at residues 28-48 (RAEIASRLGFKSANAAEEHLK). Catalysis depends on for autocatalytic cleavage activity residues Ser124 and Lys161.

It belongs to the peptidase S24 family. In terms of assembly, homodimer.

The catalysed reaction is Hydrolysis of Ala-|-Gly bond in repressor LexA.. Functionally, represses a number of genes involved in the response to DNA damage (SOS response), including recA and lexA. In the presence of single-stranded DNA, RecA interacts with LexA causing an autocatalytic cleavage which disrupts the DNA-binding part of LexA, leading to derepression of the SOS regulon and eventually DNA repair. The polypeptide is LexA repressor (Shewanella amazonensis (strain ATCC BAA-1098 / SB2B)).